The primary structure comprises 294 residues: MNARAESLPTVASDLISLTKPRLSSLVLVTAAGGMWLAPGHMGAVNALVTLLATAGTVGAANALNCYWERHSDQFMDRTRNRPLPSGRMEPAVALWFGISLAAVSLPALALGANVLTAALGLVALLSYVLAYTPLKARTSAAMLVGGVPGALPPLMGWTAVTNQMDVGGFSLFAIMFLWQMPHFIAIALFRKEEYRAAGLTSVPLERGDESSRAQVVLYLVALIPMTLLPFQLHIAGAWYLAAAVLLGLSFLGLGAWGFFRRLGNTWARQTFFFSLIYLTGLFAALALDRVPRE.

9 helical membrane-spanning segments follow: residues 25–45, 48–68, 92–112, 115–135, 141–161, 170–190, 216–236, 240–260, and 272–292; these read SLVL…MGAV, LVTL…NCYW, AVAL…LALG, VLTA…YTPL, AAML…WTAV, FSLF…IALF, VVLY…LHIA, YLAA…WGFF, and FFFS…DRVP.

This sequence belongs to the UbiA prenyltransferase family. Protoheme IX farnesyltransferase subfamily.

It is found in the cell inner membrane. It carries out the reaction heme b + (2E,6E)-farnesyl diphosphate + H2O = Fe(II)-heme o + diphosphate. It participates in porphyrin-containing compound metabolism; heme O biosynthesis; heme O from protoheme: step 1/1. In terms of biological role, converts heme B (protoheme IX) to heme O by substitution of the vinyl group on carbon 2 of heme B porphyrin ring with a hydroxyethyl farnesyl side group. This is Protoheme IX farnesyltransferase from Myxococcus xanthus (strain DK1622).